Reading from the N-terminus, the 320-residue chain is O(6)-methylguanine-induced apoptosis 2 (320 aa).

The segment at 46–91 (LNESPGPGSYLSHSPAEGCSPSFSKRGTGSFASKGGRVPRSFQRLS) is disordered. 7 STPGR repeats span residues 49–82 (SPGP…KGGR), 91–103 (SPGP…QMSL), 132–163 (NPAP…KTRR), 173–192 (GPSP…SPQA), 213–233 (PGPG…TVLP), 254–266 (PGPG…NYNR), and 294–305 (PGPGFYEPTVLS). Over residues 66–76 (PSFSKRGTGSF) the composition is skewed to polar residues. Residues 207–226 (PVRNNIPGPGTYNPHQPPEP) are disordered.

This sequence belongs to the STPG1 family.

Its subcellular location is the cytoplasm. It is found in the nucleus. May positively contribute to the induction of apoptosis triggered by O(6)-methylguanine. The protein is O(6)-methylguanine-induced apoptosis 2 (stpg1) of Danio rerio (Zebrafish).